We begin with the raw amino-acid sequence, 463 residues long: Adenosylhomocysteinase (463 aa).

Residues Thr-54, Asp-128, and Glu-189 each coordinate substrate. Residue 190-192 (TTT) participates in NAD(+) binding. Residues Lys-219 and Asp-223 each contribute to the substrate site. NAD(+) contacts are provided by residues Asn-224, 253–258 (GYGDVG), Glu-276, Asn-311, 332–334 (IGH), and Asn-377.

This sequence belongs to the adenosylhomocysteinase family. The cofactor is NAD(+).

It is found in the cytoplasm. The catalysed reaction is S-adenosyl-L-homocysteine + H2O = L-homocysteine + adenosine. It participates in amino-acid biosynthesis; L-homocysteine biosynthesis; L-homocysteine from S-adenosyl-L-homocysteine: step 1/1. May play a key role in the regulation of the intracellular concentration of adenosylhomocysteine. The polypeptide is Adenosylhomocysteinase (Cereibacter sphaeroides (Rhodobacter sphaeroides)).